A 508-amino-acid polypeptide reads, in one-letter code: CUGBP Elav-like family member 2 (508 aa).

Necessary for RNA-binding, TNNT2 exon 5 and NMDA R1 exon 21 inclusion stretches follow at residues 1–283 and 357–508; these read MRCP…LQNL and LAGM…SKPY. RRM domains are found at residues 40–123, 132–212, and 423–501; these read IKMF…PADS, RKLF…FADT, and ANLF…LKRS.

This sequence belongs to the CELF/BRUNOL family. Interacts with A1CF. As to expression, expressed in tongue, spleen and brain (at protein level). Expressed in liver, thigh, stomach, lung and heart to very low levels (at protein level). Expressed in heart, brain, lung and muscle.

The protein localises to the nucleus. It is found in the cytoplasm. Functionally, RNA-binding protein implicated in the regulation of several post-transcriptional events. Involved in pre-mRNA alternative splicing, mRNA translation and stability. Mediates exon inclusion and/or exclusion in pre-mRNA that are subject to tissue-specific and developmentally regulated alternative splicing. Specifically activates exon 5 inclusion of TNNT2 in embryonic, but not adult, skeletal muscle. Activates TNNT2 exon 5 inclusion by antagonizing the repressive effect of PTB. Acts both as an activator and as a repressor of a pair of coregulated exons: promotes inclusion of the smooth muscle (SM) exon but exclusion of the non-muscle (NM) exon in actinin pre-mRNAs. Promotes inclusion of exonS 21 and exclusion of exon 5 of the NMDA receptor R1 pre-mRNA. Involved in the apoB RNA editing activity. Increases COX2 mRNA stability and inhibits COX2 mRNA translation in epithelial cells after radiation injury. Modulates the cellular apoptosis program by regulating COX2-mediated prostaglandin E2 (PGE2) expression. Binds to (CUG)n triplet repeats in the 3'-UTR of transcripts such as DMPK. Binds to the muscle-specific splicing enhancer (MSE) intronic sites flanking the TNNT2 alternative exon 5. Binds preferentially to UG-rich sequences, in particular UG repeat and UGUU motifs. Binds to apoB mRNA, specifically to AU-rich sequences located immediately upstream of the edited cytidine. Binds AU-rich sequences in the 3'-UTR of COX2 mRNA. Binds to an intronic RNA element responsible for the silencing of exon 21 splicing. Binds to (CUG)n repeats. May be a specific regulator of miRNA biogenesis. Binds to primary microRNA pri-MIR140 and, with CELF1, negatively regulates the processing to mature miRNA. This chain is CUGBP Elav-like family member 2 (Celf2), found in Mus musculus (Mouse).